We begin with the raw amino-acid sequence, 1125 residues long: Tip elongation aberrant protein 3 (1125 aa).

Kelch repeat units follow at residues Phe73–Asp123, Thr124–Ser179, Leu181–Met226, Lys259–Asp308, and Val310–Asn360. Phosphoserine is present on residues Ser430, Ser437, Ser460, Ser523, Ser980, Ser982, Ser983, Ser984, Ser1078, and Ser1080. The disordered stretch occupies residues Pro507–Ser530. A compositionally biased stretch (low complexity) spans Ile515–Ser530.

It is found in the cell tip. In terms of biological role, acts as a cell end marker required for efficient new end take-off (NETO), whereby growth is activated at the cell end to generate bipolarity in extending cells. Also required for proper placement of the septum. This Schizosaccharomyces pombe (strain 972 / ATCC 24843) (Fission yeast) protein is Tip elongation aberrant protein 3 (tea3).